Consider the following 231-residue polypeptide: Urease accessory protein UreE (231 aa).

The segment at 185-231 (VASPLDEPHGSGLHIHGIHSHGEGHSHGDHDHDHSHSHGDHDHDHKH) is disordered. Over residues 204 to 231 (SHGEGHSHGDHDHDHSHSHGDHDHDHKH) the composition is skewed to basic and acidic residues.

Belongs to the UreE family.

Its subcellular location is the cytoplasm. In terms of biological role, involved in urease metallocenter assembly. Binds nickel. Probably functions as a nickel donor during metallocenter assembly. This Yersinia pseudotuberculosis serotype O:1b (strain IP 31758) protein is Urease accessory protein UreE.